The following is a 370-amino-acid chain: MELATMGKVNEVLFMNGGEGEISYAQNSSFTEKVASMAMPALENAVETLFSKDFHLLPALNAADLGCAAGPNTFAVISMIKRMMEKKCRELYCQTPELQVYLNDLFGNDFNTLFKGLSSEVVGNKCEEVSCYVMGVPGSFHGRLFPRNSLHLVHSSYSVHWLTQAPKGLTSREGLALNKGKIYISKTSPPAVKEAYLSQFHEDFTMFLNARSQEVVPNGCMVLILHGRQSSDPSEMESCFTWELLAIAIAELVSQGLIDEDKLDTFNVPSYFPSLEEVKDIVERDGSFTIDHLEGFELDSLEMQENDKWVRGDKFAKMVRAFTEPIISNQFGHEIMDKLYDKFTHIVVSDLEAELPKTTSIILVLSKIVG.

Tyr-24 is an S-adenosyl-L-homocysteine binding site. Thr-31 lines the theobromine pocket. The S-adenosyl-L-homocysteine site is built by Cys-67, Asn-72, Asp-104, Leu-105, Ser-139, and Phe-140. Theobromine-binding residues include Tyr-157, His-160, and Trp-161. Residue Asn-178 coordinates Mg(2+). Residue His-226 participates in theobromine binding. Asp-264, Phe-266, and Asn-267 together coordinate Mg(2+). A theobromine-binding site is contributed by Phe-322.

It belongs to the methyltransferase superfamily. Type-7 methyltransferase family. The cofactor is Mg(2+).

The catalysed reaction is 7-methylxanthine + S-adenosyl-L-methionine = theobromine + S-adenosyl-L-homocysteine + H(+). It functions in the pathway alkaloid biosynthesis. Involved in the biosynthesis of caffeine in cv. Puer. Involved in the biosynthesis of theacrine in cv. Kucha, a caffeine-like xanthine alkaloid with diverse beneficial biological activities including anti-depressive, sedative, and hypnotic activities, improving learning and memory, increasing exercise activity, and preventing nonalcoholic fatty liver disease. Catalyzes the conversion of 7-methylxanthine (7mX) to theobromine but not able to convert paraxanthine to caffeine. In Camellia sinensis var. assamica (Assam tea), this protein is 3,7-dimethylxanthine N-methyltransferase CkTbS.